The sequence spans 308 residues: Glucan 1,3-beta-glucosidase (308 aa).

The first 18 residues, 1–18 (MQIKFLTTLATVLTSVAA), serve as a signal peptide directing secretion. E119 acts as the Proton donor in catalysis. N197 is a glycosylation site (N-linked (GlcNAc...) asparagine). E228 acts as the Nucleophile in catalysis.

The protein belongs to the glycosyl hydrolase 17 family.

It is found in the secreted. The protein localises to the cell wall. The catalysed reaction is Successive hydrolysis of beta-D-glucose units from the non-reducing ends of (1-&gt;3)-beta-D-glucans, releasing alpha-glucose.. This chain is Glucan 1,3-beta-glucosidase (BGL2), found in Candida albicans (Yeast).